The sequence spans 206 residues: Thymidylate kinase (206 aa).

7–14 (GGEGVGKT) is an ATP binding site.

This sequence belongs to the thymidylate kinase family.

The enzyme catalyses dTMP + ATP = dTDP + ADP. Phosphorylation of dTMP to form dTDP in both de novo and salvage pathways of dTTP synthesis. The polypeptide is Thymidylate kinase (Synechococcus sp. (strain JA-2-3B'a(2-13)) (Cyanobacteria bacterium Yellowstone B-Prime)).